A 362-amino-acid chain; its full sequence is MKAFLVLDNGTIFEGESFGYETESVGEIVFNTSMAGYQEILTDPSYCNQIITLTYPMIGNYGIHPDNMESSKIQASGLIVKEYVDLPSNFKSEKTLSQFLKEYKIPAIQGIDTRKLTRFIRTNGSPNGGIFVASEYSPSFLEKVKSFPGIINADLAKVVTTSSKYIFGTHTGKKFKLAVYDYGVKTNILRLLDANGFAVTVYPAKTPSEEIMKEGTDAFFLSNGPGDPAPLDYAIASTQKIMEKRYPLFGICLGHQIIGLSLGKKTEKMKFGHRGGNQPVKNLETGQVEITSQNHGFAVIDDQKQDEPISFLNLNDHTVEGILKSGYPLLTVQYHPESAPGPNDSRYLFQKFYDLVEKTKKG.

The tract at residues 1-172 (MKAFLVLDNG…SKYIFGTHTG (172 aa)) is CPSase. Residues serine 45, glycine 224, and glycine 226 each contribute to the L-glutamine site. The Glutamine amidotransferase type-1 domain occupies 176-362 (KLAVYDYGVK…YDLVEKTKKG (187 aa)). The active-site Nucleophile is the cysteine 252. Residues leucine 253, glutamine 256, asparagine 294, glycine 296, and phenylalanine 297 each coordinate L-glutamine. Active-site residues include histidine 335 and glutamate 337.

The protein belongs to the CarA family. In terms of assembly, composed of two chains; the small (or glutamine) chain promotes the hydrolysis of glutamine to ammonia, which is used by the large (or ammonia) chain to synthesize carbamoyl phosphate. Tetramer of heterodimers (alpha,beta)4.

It catalyses the reaction hydrogencarbonate + L-glutamine + 2 ATP + H2O = carbamoyl phosphate + L-glutamate + 2 ADP + phosphate + 2 H(+). The enzyme catalyses L-glutamine + H2O = L-glutamate + NH4(+). The protein operates within amino-acid biosynthesis; L-arginine biosynthesis; carbamoyl phosphate from bicarbonate: step 1/1. It participates in pyrimidine metabolism; UMP biosynthesis via de novo pathway; (S)-dihydroorotate from bicarbonate: step 1/3. Functionally, small subunit of the glutamine-dependent carbamoyl phosphate synthetase (CPSase). CPSase catalyzes the formation of carbamoyl phosphate from the ammonia moiety of glutamine, carbonate, and phosphate donated by ATP, constituting the first step of 2 biosynthetic pathways, one leading to arginine and/or urea and the other to pyrimidine nucleotides. The small subunit (glutamine amidotransferase) binds and cleaves glutamine to supply the large subunit with the substrate ammonia. The protein is Carbamoyl phosphate synthase small chain of Leptospira interrogans serogroup Icterohaemorrhagiae serovar Lai (strain 56601).